The sequence spans 318 residues: Ornithine carbamoyltransferase (318 aa).

Carbamoyl phosphate contacts are provided by residues 63–66 (STRT), glutamine 90, arginine 114, and 141–144 (HPCQ). Residues asparagine 172, aspartate 235, and 239–240 (SM) each bind L-ornithine. Residues 275–276 (CL) and arginine 303 contribute to the carbamoyl phosphate site.

The protein belongs to the aspartate/ornithine carbamoyltransferase superfamily. OTCase family.

The protein localises to the cytoplasm. It catalyses the reaction carbamoyl phosphate + L-ornithine = L-citrulline + phosphate + H(+). The protein operates within amino-acid biosynthesis; L-arginine biosynthesis; L-arginine from L-ornithine and carbamoyl phosphate: step 1/3. Its function is as follows. Reversibly catalyzes the transfer of the carbamoyl group from carbamoyl phosphate (CP) to the N(epsilon) atom of ornithine (ORN) to produce L-citrulline. The protein is Ornithine carbamoyltransferase of Prochlorococcus marinus (strain SARG / CCMP1375 / SS120).